Reading from the N-terminus, the 381-residue chain is Bifunctional enzyme Fae/Hps (381 aa).

Positions 1-150 (MIKFGEAVLG…KEKYRALHPL (150 aa)) are formaldehyde-activating enzyme. A 3-hexulose-6-phosphate synthase region spans residues 151–381 (VGFRDVRLEY…DEDEDIGEEL (231 aa)).

It in the N-terminal section; belongs to the formaldehyde-activating enzyme family. This sequence in the C-terminal section; belongs to the HPS/KGPDC family. HPS subfamily.

The enzyme catalyses 5,6,7,8-tetrahydromethanopterin + formaldehyde = 5,10-methylenetetrahydromethanopterin + H2O. The catalysed reaction is D-ribulose 5-phosphate + formaldehyde = D-arabino-hex-3-ulose 6-phosphate. It participates in carbohydrate biosynthesis; D-ribose 5-phosphate biosynthesis. Its function is as follows. Catalyzes the condensation of formaldehyde with tetrahydromethanopterin (H(4)MPT) to 5,10-methylenetetrahydromethanopterin. Catalyzes the reversible formation of ribulose-5-phosphate and formaldehyde from 3-hexulose-6-phosphate. In Methanocaldococcus jannaschii (strain ATCC 43067 / DSM 2661 / JAL-1 / JCM 10045 / NBRC 100440) (Methanococcus jannaschii), this protein is Bifunctional enzyme Fae/Hps.